The primary structure comprises 829 residues: Periplasmic nitrate reductase (829 aa).

The first 30 residues, 1–30 (MNSPRPTPPPFAAAAAGLPILVRASNLVTE), serve as a signal peptide directing secretion. A 4Fe-4S Mo/W bis-MGD-type domain is found at 36–92 (LVWNKAPCRFCGTGCSVMVATRDGQVVATHGDIKAEVNRGINCVKGYFLSKIMYGSD). [4Fe-4S] cluster-binding residues include Cys43, Cys46, Cys50, and Cys78. Mo-bis(molybdopterin guanine dinucleotide)-binding positions include Lys80, Gln147, Asn172, Cys176, 209-216 (WGSNMAEM), 240-244 (STFEH), 259-261 (QTD), Met370, Gln374, Asn480, 506-507 (SD), Lys529, Asp556, and 716-725 (TGRVLEHWHT). Phe792 provides a ligand contact to substrate. 2 residues coordinate Mo-bis(molybdopterin guanine dinucleotide): Asn800 and Lys817.

It belongs to the prokaryotic molybdopterin-containing oxidoreductase family. NasA/NapA/NarB subfamily. Component of the periplasmic nitrate reductase NapAB complex composed of NapA and NapB. The cofactor is [4Fe-4S] cluster. It depends on Mo-bis(molybdopterin guanine dinucleotide) as a cofactor.

It localises to the periplasm. The enzyme catalyses 2 Fe(II)-[cytochrome] + nitrate + 2 H(+) = 2 Fe(III)-[cytochrome] + nitrite + H2O. Its function is as follows. Catalytic subunit of the periplasmic nitrate reductase complex NapAB. Receives electrons from NapB and catalyzes the reduction of nitrate to nitrite. In Pseudomonas aeruginosa (strain ATCC 15692 / DSM 22644 / CIP 104116 / JCM 14847 / LMG 12228 / 1C / PRS 101 / PAO1), this protein is Periplasmic nitrate reductase.